An 89-amino-acid chain; its full sequence is Signal recognition particle 19 kDa protein (89 aa).

The protein belongs to the SRP19 family. As to quaternary structure, part of the signal recognition particle protein translocation system, which is composed of SRP and FtsY. Archaeal SRP consists of a 7S RNA molecule of 300 nucleotides and two protein subunits: SRP54 and SRP19.

Its subcellular location is the cytoplasm. In terms of biological role, involved in targeting and insertion of nascent membrane proteins into the cytoplasmic membrane. Binds directly to 7S RNA and mediates binding of the 54 kDa subunit of the SRP. The sequence is that of Signal recognition particle 19 kDa protein from Methanococcus maripaludis (strain DSM 14266 / JCM 13030 / NBRC 101832 / S2 / LL).